A 277-amino-acid chain; its full sequence is Phosphatidylglycerol--prolipoprotein diacylglyceryl transferase (277 aa).

A run of 4 helical transmembrane segments spans residues 22–42 (WYGV…LSEA), 51–71 (IIVD…RIYY), 89–109 (IWHG…TAII), and 116–136 (ISFW…QAIG). Residue R137 coordinates a 1,2-diacyl-sn-glycero-3-phospho-(1'-sn-glycerol). The next 3 helical transmembrane spans lie at 177–197 (QPTF…LLII), 205–225 (GELF…IEGM), and 235–255 (FRVS…LIIY).

It belongs to the Lgt family.

It is found in the cell membrane. The enzyme catalyses L-cysteinyl-[prolipoprotein] + a 1,2-diacyl-sn-glycero-3-phospho-(1'-sn-glycerol) = an S-1,2-diacyl-sn-glyceryl-L-cysteinyl-[prolipoprotein] + sn-glycerol 1-phosphate + H(+). Its pathway is protein modification; lipoprotein biosynthesis (diacylglyceryl transfer). Catalyzes the transfer of the diacylglyceryl group from phosphatidylglycerol to the sulfhydryl group of the N-terminal cysteine of a prolipoprotein, the first step in the formation of mature lipoproteins. This chain is Phosphatidylglycerol--prolipoprotein diacylglyceryl transferase, found in Listeria welshimeri serovar 6b (strain ATCC 35897 / DSM 20650 / CCUG 15529 / CIP 8149 / NCTC 11857 / SLCC 5334 / V8).